The sequence spans 79 residues: CDC42 small effector protein 1 (79 aa).

S-palmitoyl cysteine attachment occurs at residues Cys10 and Cys11. The region spanning 30-43 (IGEPMNFVHLTHIG) is the CRIB domain. Positions 48–79 (GAGDGLAMTGAVQEQMRSKGNRDRPWSNSRAL) are disordered. Basic and acidic residues predominate over residues 63-72 (MRSKGNRDRP).

This sequence belongs to the CDC42SE/SPEC family. Interacts with CDC42 (in GTP-bound form). Interacts weakly with RAC1 and not at all with RHOA.

It localises to the cytoplasm. It is found in the cytoskeleton. Its subcellular location is the cell membrane. Its function is as follows. Probably involved in the organization of the actin cytoskeleton by acting downstream of CDC42, inducing actin filament assembly. Alters CDC42-induced cell shape changes. In activated T-cells, may play a role in CDC42-mediated F-actin accumulation at the immunological synapse. May play a role in early contractile events in phagocytosis in macrophages. This chain is CDC42 small effector protein 1 (Cdc42se1), found in Rattus norvegicus (Rat).